Reading from the N-terminus, the 232-residue chain is Beta-casein (232 aa).

An N-terminal signal peptide occupies residues 1–15 (MKLLILACFVALALA). N22 carries N-linked (GlcNAc...) asparagine glycosylation. S24 is modified (phosphoserine). Phosphothreonine is present on T27. Phosphoserine is present on residues S30, S32, S33, and S34. Positions 48 to 63 (KLKREEQQQTENERQN) are enriched in basic and acidic residues. The tract at residues 48 to 74 (KLKREEQQQTENERQNKIHQFPQPQPL) is disordered.

It belongs to the beta-casein family. Mammary gland specific. Secreted in milk.

It is found in the secreted. Its function is as follows. Important role in determination of the surface properties of the casein micelles. In Sus scrofa (Pig), this protein is Beta-casein (CSN2).